Consider the following 161-residue polypeptide: Phosphopantetheine adenylyltransferase (161 aa).

Residue T10 coordinates substrate. Residues 10-11 (TF) and H18 contribute to the ATP site. Substrate is bound by residues K42, L74, and R88. ATP-binding positions include 89–91 (GLR), E99, and 124–130 (NSFISST).

Belongs to the bacterial CoaD family. As to quaternary structure, homohexamer. Requires Mg(2+) as cofactor.

The protein resides in the cytoplasm. The enzyme catalyses (R)-4'-phosphopantetheine + ATP + H(+) = 3'-dephospho-CoA + diphosphate. It participates in cofactor biosynthesis; coenzyme A biosynthesis; CoA from (R)-pantothenate: step 4/5. Reversibly transfers an adenylyl group from ATP to 4'-phosphopantetheine, yielding dephospho-CoA (dPCoA) and pyrophosphate. The chain is Phosphopantetheine adenylyltransferase from Photobacterium profundum (strain SS9).